The primary structure comprises 131 residues: Anaerobic and virulence modulator AnvM (131 aa).

Its function is as follows. Plays an essential role by modulating the expression of hundreds of genes including quorum sensing system genes and oxidative stress resistance genes under both aerobic and anaerobic conditions. The sequence is that of Anaerobic and virulence modulator AnvM from Pseudomonas aeruginosa (strain ATCC 15692 / DSM 22644 / CIP 104116 / JCM 14847 / LMG 12228 / 1C / PRS 101 / PAO1).